The following is a 231-amino-acid chain: Orotidine 5'-phosphate decarboxylase (231 aa).

Substrate-binding positions include Asp-11, Lys-33, 60 to 69 (DLKFHDIPNT), Thr-119, Arg-180, Gln-189, Gly-209, and Arg-210. The Proton donor role is filled by Lys-62.

This sequence belongs to the OMP decarboxylase family. Type 1 subfamily. As to quaternary structure, homodimer.

It catalyses the reaction orotidine 5'-phosphate + H(+) = UMP + CO2. It participates in pyrimidine metabolism; UMP biosynthesis via de novo pathway; UMP from orotate: step 2/2. In terms of biological role, catalyzes the decarboxylation of orotidine 5'-monophosphate (OMP) to uridine 5'-monophosphate (UMP). This is Orotidine 5'-phosphate decarboxylase from Idiomarina loihiensis (strain ATCC BAA-735 / DSM 15497 / L2-TR).